A 533-amino-acid chain; its full sequence is GDP-fucose protein O-fucosyltransferase 4 (533 aa).

Residues 1 to 20 are Cytoplasmic-facing; sequence MSAGCTQLVWGGRLHWGASH. Residues 21–37 form a helical; Signal-anchor for type II membrane protein membrane-spanning segment; the sequence is LLSCLLALCALWVLAAA. Residues 38–533 lie on the Lumenal side of the membrane; it reads EPTEGGSANV…ETYIKRSMNH (496 aa). Residues N148, N206, and N358 are each glycosylated (N-linked (GlcNAc...) asparagine). Cysteines 429 and 432 form a disulfide. N511 carries an N-linked (GlcNAc...) asparagine glycan.

Belongs to the glycosyltransferase 10 family.

The protein resides in the endoplasmic reticulum membrane. It catalyses the reaction L-threonyl-[protein] + GDP-beta-L-fucose = 3-O-(alpha-L-fucosyl)-L-threonyl-[protein] + GDP + H(+). It carries out the reaction L-seryl-[protein] + GDP-beta-L-fucose = 3-O-(alpha-L-fucosyl)-L-seryl-[protein] + GDP + H(+). Its pathway is protein modification; protein glycosylation. Its function is as follows. Protein O-fucosyltransferase that specifically catalyzes O-fucosylation of serine or threonine residues in EMI domains of target proteins. Attaches fucose through an O-glycosidic linkage. O-fucosylation of EMI domain-containing proteins may be required for facilitating protein folding and secretion. This chain is GDP-fucose protein O-fucosyltransferase 4 (fut11), found in Xenopus tropicalis (Western clawed frog).